Here is a 466-residue protein sequence, read N- to C-terminus: GTPase Der (466 aa).

2 EngA-type G domains span residues 3 to 167 and 176 to 350; these read PTLV…PDEP and PKIA…GAAM. GTP-binding positions include 9-16, 56-60, 119-122, 182-189, 229-233, and 294-297; these read GRSNVGKS, DTGGF, NKTE, GRPNVGKS, DTAGL, and NKWD. In terms of domain architecture, KH-like spans 351–435; sequence AHLPTPRLTR…PLRIEFRTGR (85 aa). The segment at 433–466 is disordered; it reads TGRNPYAGKSPAPLTEAEAKRAHRRRRYGRKKYG. Residues 453–466 show a composition bias toward basic residues; it reads RAHRRRRYGRKKYG.

It belongs to the TRAFAC class TrmE-Era-EngA-EngB-Septin-like GTPase superfamily. EngA (Der) GTPase family. In terms of assembly, associates with the 50S ribosomal subunit.

In terms of biological role, GTPase that plays an essential role in the late steps of ribosome biogenesis. This is GTPase Der from Nitrosospira multiformis (strain ATCC 25196 / NCIMB 11849 / C 71).